Here is a 452-residue protein sequence, read N- to C-terminus: Protein CSN12 homolog (452 aa).

Positions 249–446 (VTFKYYEGVL…GFVVLSKSGA (198 aa)) constitute a PCI domain.

This sequence belongs to the CSN12 family.

This chain is Protein CSN12 homolog (csn-8), found in Neurospora crassa (strain ATCC 24698 / 74-OR23-1A / CBS 708.71 / DSM 1257 / FGSC 987).